The following is a 78-amino-acid chain: Cytochrome c oxidase subunit 6b-2 (78 aa).

A CHCH domain is found at threonine 22 to tryptophan 65. Positions cysteine 25–cysteine 35 match the Cx9C motif motif. Cystine bridges form between cysteine 25-cysteine 57 and cysteine 35-cysteine 46. The short motif at cysteine 46–cysteine 57 is the Cx10C motif element.

This sequence belongs to the cytochrome c oxidase subunit 6B (TC 3.D.4.8) family. In terms of tissue distribution, specifically expressed in roots.

The protein localises to the mitochondrion. In terms of biological role, this protein is one of the nuclear-coded polypeptide chains of cytochrome c oxidase, the terminal oxidase in mitochondrial electron transport. This protein may be one of the heme-binding subunits of the oxidase. The sequence is that of Cytochrome c oxidase subunit 6b-2 (COX6B-2) from Arabidopsis thaliana (Mouse-ear cress).